The following is a 456-amino-acid chain: Phospholipase A1 member A (456 aa).

Residues 1-25 form the signal peptide; that stretch reads MRPGLWETCFWLWGPLLWLSIGSSG. The active-site Nucleophile is Ser-166. Asp-190 functions as the Charge relay system in the catalytic mechanism. Cys-245 and Cys-258 are joined by a disulfide. Catalysis depends on His-260, which acts as the Charge relay system. Cystine bridges form between Cys-282–Cys-293 and Cys-296–Cys-304. Residue Asn-365 is glycosylated (N-linked (GlcNAc...) asparagine).

This sequence belongs to the AB hydrolase superfamily. Lipase family.

The protein resides in the secreted. It catalyses the reaction a 1,2-diacyl-sn-glycero-3-phospho-L-serine + H2O = a 2-acyl-sn-glycero-3-phospho-L-serine + a fatty acid + H(+). It carries out the reaction 1,2-di-(9Z)-octadecenoyl-sn-glycero-3-phospho-L-serine + H2O = 2-(9Z-octadecenoyl)-sn-glycero-3-phospho-L-serine + (9Z)-octadecenoate + H(+). The catalysed reaction is 1-hexadecanoyl-2-(5Z,8Z,11Z,14Z-eicosatetraenoyl)-sn-glycero-3-phospho-L-serine + H2O = 2-(5Z,8Z,11Z,14Z)-eicosatetraenoyl-sn-glycero-3-phospho-L-serine + hexadecanoate + H(+). The enzyme catalyses a 1-acyl-sn-glycero-3-phospho-L-serine + H2O = sn-glycero-3-phospho-L-serine + a fatty acid + H(+). It catalyses the reaction 1-(9Z-octadecenoyl)-sn-glycero-3-phospho-L-serine + H2O = sn-glycero-3-phospho-L-serine + (9Z)-octadecenoate + H(+). In terms of biological role, hydrolyzes the ester bond of the acyl group attached at the sn-1 position of phosphatidylserines (phospholipase A1 activity) and 1-acyl-2-lysophosphatidylserines (lysophospholipase activity) in the pathway of phosphatidylserines acyl chain remodeling. Cleaves phosphatidylserines exposed on the outer leaflet of the plasma membrane of apoptotic cells producing 2-acyl-1-lysophosphatidylserines, which in turn enhance mast cell activation and histamine production. Has no activity toward other glycerophospholipids including phosphatidylcholines, phosphatidylethanolamines, phosphatidic acids or phosphatidylinositols, or glycerolipids such as triolein. The sequence is that of Phospholipase A1 member A from Mus musculus (Mouse).